Consider the following 298-residue polypeptide: Rhodomycin D methylesterase DnrP (298 aa).

The region spanning 25 to 277 (PLLLIAGGNL…VEIENMGHAL (253 aa)) is the AB hydrolase-1 domain.

The protein belongs to the methyl esterase DnrP family.

It carries out the reaction rhodomycin D + H2O = 10-carboxy-13-deoxycarminomycin + methanol + H(+). It catalyses the reaction 4-O-methylrhodomycin D + H2O = 10-carboxy-13-deoxydaunorubicin + methanol + H(+). The protein operates within antibiotic biosynthesis; daunorubicin biosynthesis. Its pathway is antibiotic biosynthesis; carminomycin biosynthesis. Its function is as follows. Involved in the biosynthesis of the anthracyclines carminomycin and daunorubicin (daunomycin) which are aromatic polyketide antibiotics that exhibit high cytotoxicity and are widely applied in the chemotherapy of a variety of cancers. Catalyzes the removal of methyl group from the carbomethoxy group of rhodomycin D (10-carbomethoxy-13-deoxycarminomycin) and 4-O-methylrhodomycin D to yield 10-carboxy-13-deoxycarminomycin and 10-carboxy-13-deoxydaunorubicin, respectively. Could be also involved in the decarboxylation of 10-carboxy-13-deoxycarminomycin and 10-carboxy-13-deoxydaunorubicin to yield 13-deoxycarminomycin and 13-deoxydaunorubicin, respectively. It seems that DnrK may influence the ability of DnrP to carry out the decarboxylation. The sequence is that of Rhodomycin D methylesterase DnrP (dnrP) from Streptomyces peucetius.